The primary structure comprises 136 residues: Histone H3.3 (136 aa).

Positions 1–41 (MARTKQTARKSTGVKAPRKQLATKAARKSAPVSGGVKKPHK) are disordered.

Belongs to the histone H3 family. The nucleosome is a histone octamer containing two molecules each of H2A, H2B, H3 and H4 assembled in one H3-H4 heterotetramer and two H2A-H2B heterodimers. The octamer wraps approximately 147 bp of DNA. Acetylated. Acetylation occurs almost exclusively in the MAC.

It is found in the nucleus. Its subcellular location is the chromosome. In terms of biological role, macronuclear replacement variant which replaces conventional H3 in a subset of nucleosomes. Nucleosomes wrap and compact DNA into chromatin, limiting DNA accessibility to the cellular machineries which require DNA as a template. Histones thereby play a central role in transcription regulation, DNA repair, DNA replication and chromosomal stability. DNA accessibility is regulated via a complex set of post-translational modifications of histones, also called histone code, and nucleosome remodeling. Functions redundantly to H3.4. H3.3 deposition into chromatin is mainly transcription-associated and DNA replication-independent, but it can also enter a replication-coupled pathway. Although not essential for vegetative growth, minor H3 variants are required for producing viable conjugation progeny by affecting late developmental stages of conjugation. This chain is Histone H3.3, found in Tetrahymena pyriformis.